Reading from the N-terminus, the 521-residue chain is Occludin (521 aa).

The Cytoplasmic portion of the chain corresponds to 1-66 (MSSRPFESPP…KWTSPPGVIR (66 aa)). The MARVEL domain occupies 60–268 (SPPGVIRILS…IIFFAVKTRR (209 aa)). The helical transmembrane segment at 67–89 (ILSMLVIVMCIAIFGCVASTLAW) threads the bilayer. At 90–134 (DRGYGTGLMGGSIGYPYGSGFGSYGTGYGYGFGYGYGYGGYTDPR) the chain is on the extracellular side. Residues 135–159 (AAKGFLLAMVAFCFIAALVIFVTSV) traverse the membrane as a helical segment. Over 160-169 (IRSDISRTRR) the chain is Cytoplasmic. A helical transmembrane segment spans residues 170-194 (YYLTVIILSAFLGVMMFIATIVYIM). Residues 195 to 242 (GVNPTAQASGSLYSSQIYAMCNQFYASTATGLYMDQYLYHYCVVDPQE) are Extracellular-facing. Residues Cys215 and Cys236 are joined by a disulfide bond. Residues 243-264 (AIAIVLGFMVIVAFALIIFFAV) form a helical membrane-spanning segment. Residues 265-521 (KTRRKMDRYD…MVGDYDRQKT (257 aa)) are Cytoplasmic-facing. A Phosphoserine modification is found at Ser301. Residues 301 to 407 (SAGTQDMPPP…ETDYTTGGES (107 aa)) form a disordered region. Thr304 is subject to Phosphothreonine. 3 positions are modified to phosphoserine: Ser312, Ser320, and Ser339. Tyr367 carries the post-translational modification Phosphotyrosine. 2 positions are modified to phosphoserine: Ser368 and Ser369. The segment covering 380–389 (APSKGRTGRP) has biased composition (basic residues). Positions 390 to 399 (KRLEQDHYET) are enriched in basic and acidic residues. Phosphotyrosine is present on residues Tyr397 and Tyr401. Residues Thr402 and Thr403 each carry the phosphothreonine; by PKC/PRKCH modification. The residue at position 407 (Ser407) is a Phosphoserine. The region spanning 413-521 (EDWIREYPPI…MVGDYDRQKT (109 aa)) is the OCEL domain. A coiled-coil region spans residues 424 to 488 (SDQQRQLYKR…EYNRLKQVKG (65 aa)). At Ser489 the chain carries Phosphoserine.

Belongs to the ELL/occludin family. As to quaternary structure, interacts with TJP1/ZO1. Interacts with VAPA. Interacts with CLDN1, CLDN6, CLDN9, CLDN11, CLDN12 and CLDN17. Interacts with PLSCR1. Interacts with LSR, ILDR1 and ILDR2. Interacts with TJP2/ZO2. In terms of processing, dephosphorylated by PTPRJ. Less-phosphorylated forms are found in basolateral membrane, cytosol and tight junction. More-heavily phosphorylated forms are concentrated exclusively in tight junction. As to expression, localized at tight junctions of both epithelial and endothelial cells.

The protein resides in the cell membrane. It localises to the cell junction. It is found in the tight junction. In terms of biological role, may play a role in the formation and regulation of the tight junction (TJ) paracellular permeability barrier. Interacts with ZO-1. This chain is Occludin (OCLN), found in Canis lupus familiaris (Dog).